The sequence spans 748 residues: WD repeat-containing protein 91 (748 aa).

A coiled-coil region spans residues Q183 to L228. Residue S257 is modified to Phosphoserine. The span at L266–P279 shows a compositional bias: low complexity. Residues L266 to P368 form a disordered region. A compositionally biased stretch (polar residues) spans P284–T300. Phosphoserine occurs at positions 289 and 294. Residues R333–L344 show a composition bias toward basic and acidic residues. Residues L345–C354 are compositionally biased toward polar residues. WD repeat units follow at residues E407–A446, I449–E489, V512–Q556, P561–S600, A603–S642, V665–E703, and G710–L748.

Belongs to the WD repeat WDR91 family. As to quaternary structure, interacts with WDR81; involved in early to late endosome cargo transport. Interacts with BECN1; negatively regulates the PI3 kinase/PI3K activity associated with endosomal membranes.

It localises to the early endosome membrane. The protein resides in the late endosome membrane. Functionally, functions as a negative regulator of the PI3 kinase/PI3K activity associated with endosomal membranes via BECN1, a core subunit of the PI3K complex. By modifying the phosphatidylinositol 3-phosphate/PtdInsP3 content of endosomal membranes may regulate endosome fusion, recycling, sorting and early to late endosome transport. It is for instance, required for the delivery of cargos like BST2/tetherin from early to late endosome and thereby participates indirectly to their degradation by the lysosome. May play a role in meiosis. The protein is WD repeat-containing protein 91 of Mus musculus (Mouse).